Reading from the N-terminus, the 529-residue chain is Bifunctional purine biosynthesis protein PurH (529 aa).

Positions 1–148 (MQQRRPVRRA…KNHKDVAIVV (148 aa)) constitute an MGS-like domain.

This sequence belongs to the PurH family.

The catalysed reaction is (6R)-10-formyltetrahydrofolate + 5-amino-1-(5-phospho-beta-D-ribosyl)imidazole-4-carboxamide = 5-formamido-1-(5-phospho-D-ribosyl)imidazole-4-carboxamide + (6S)-5,6,7,8-tetrahydrofolate. It catalyses the reaction IMP + H2O = 5-formamido-1-(5-phospho-D-ribosyl)imidazole-4-carboxamide. It functions in the pathway purine metabolism; IMP biosynthesis via de novo pathway; 5-formamido-1-(5-phospho-D-ribosyl)imidazole-4-carboxamide from 5-amino-1-(5-phospho-D-ribosyl)imidazole-4-carboxamide (10-formyl THF route): step 1/1. Its pathway is purine metabolism; IMP biosynthesis via de novo pathway; IMP from 5-formamido-1-(5-phospho-D-ribosyl)imidazole-4-carboxamide: step 1/1. The sequence is that of Bifunctional purine biosynthesis protein PurH from Salmonella dublin (strain CT_02021853).